Here is a 353-residue protein sequence, read N- to C-terminus: Probable dual-specificity RNA methyltransferase RlmN (353 aa).

Catalysis depends on Glu90, which acts as the Proton acceptor. Residues 96–326 (YKHGNSICIS…VTTRREMGSD (231 aa)) enclose the Radical SAM core domain. Residues Cys103 and Cys331 are joined by a disulfide bond. Residues Cys110, Cys114, and Cys117 each contribute to the [4Fe-4S] cluster site. S-adenosyl-L-methionine-binding positions include 157-158 (GE), Ser189, 212-214 (SLH), and Asn288. Catalysis depends on Cys331, which acts as the S-methylcysteine intermediate.

The protein belongs to the radical SAM superfamily. RlmN family. The cofactor is [4Fe-4S] cluster.

Its subcellular location is the cytoplasm. The catalysed reaction is adenosine(2503) in 23S rRNA + 2 reduced [2Fe-2S]-[ferredoxin] + 2 S-adenosyl-L-methionine = 2-methyladenosine(2503) in 23S rRNA + 5'-deoxyadenosine + L-methionine + 2 oxidized [2Fe-2S]-[ferredoxin] + S-adenosyl-L-homocysteine. It catalyses the reaction adenosine(37) in tRNA + 2 reduced [2Fe-2S]-[ferredoxin] + 2 S-adenosyl-L-methionine = 2-methyladenosine(37) in tRNA + 5'-deoxyadenosine + L-methionine + 2 oxidized [2Fe-2S]-[ferredoxin] + S-adenosyl-L-homocysteine. In terms of biological role, specifically methylates position 2 of adenine 2503 in 23S rRNA and position 2 of adenine 37 in tRNAs. The sequence is that of Probable dual-specificity RNA methyltransferase RlmN from Clostridium beijerinckii (strain ATCC 51743 / NCIMB 8052) (Clostridium acetobutylicum).